Here is a 229-residue protein sequence, read N- to C-terminus: Large ribosomal subunit protein uL1 (229 aa).

It belongs to the universal ribosomal protein uL1 family. In terms of assembly, part of the 50S ribosomal subunit.

Functionally, binds directly to 23S rRNA. The L1 stalk is quite mobile in the ribosome, and is involved in E site tRNA release. In terms of biological role, protein L1 is also a translational repressor protein, it controls the translation of the L11 operon by binding to its mRNA. The protein is Large ribosomal subunit protein uL1 of Streptococcus pyogenes serotype M1.